Reading from the N-terminus, the 339-residue chain is Pleckstrin homology domain protein opy1 (339 aa).

Residues 25–119 (RVLKSGWLIK…WVHVLRSTTG (95 aa)) enclose the PH 1 domain. The segment covering 141–167 (ESEPNVQISDTDFDNISTEPRNQTTSP) has biased composition (polar residues). The disordered stretch occupies residues 141–170 (ESEPNVQISDTDFDNISTEPRNQTTSPLDL). The PH 2 domain occupies 233 to 330 (KVLMQGTIHW…WVAALKTSID (98 aa)).

As to quaternary structure, interacts (via domain PH 1) with phosphatidylinositol 4-phosphate 5-kinase its3; the interaction is direct but opy1 does not appear to regulate its3 localization or function.

The protein resides in the cell tip. It is found in the cell membrane. Functionally, binds phosphatidylinositol 4,5-bisphosphate (PtdIns(4,5)P2/PIP2) at the cell membrane. This chain is Pleckstrin homology domain protein opy1, found in Schizosaccharomyces pombe (strain 972 / ATCC 24843) (Fission yeast).